The following is a 309-amino-acid chain: Mitochondrial phosphate carrier protein 1, mitochondrial (309 aa).

Over 1–15 (MTRVKSKLDEELSSP) the chain is Mitochondrial intermembrane. Residues 16–36 (WFYTVCTMGGMLSAGTTHLAI) traverse the membrane as a helical segment. Solcar repeat units lie at residues 16–100 (WFYT…FKTL), 109–193 (NRTS…SVEF), and 210–289 (QQLG…IKVL). At 37–74 (TPLDVLKVNMQVNPVKYNSIPSGFSTLLREHGHSYLWR) the chain is on the mitochondrial matrix side. A helical transmembrane segment spans residues 75 to 94 (GWSGKLLGYGVQGGCRFGLY). The Mitochondrial intermembrane segment spans residues 95–111 (EYFKTLYSDVLPNHNRT). Residues 112 to 132 (SIYFLSSASAQIFADMALCPF) form a helical membrane-spanning segment. Residues 133–167 (EAIKVRVQTQPMFAKGLLDGFPRVYRSEGLAGFHR) lie on the Mitochondrial matrix side of the membrane. Residues 168–187 (GLFPLWCRNLPFSMVMFSTF) traverse the membrane as a helical segment. Residues 188–208 (EQSVEFIYQKIIQKRKQDCSK) lie on the Mitochondrial intermembrane side of the membrane. The chain crosses the membrane as a helical span at residues 209-229 (AQQLGVTCLAGYTAGAVGTII). The Mitochondrial matrix segment spans residues 230 to 268 (SNPADVVLSSLYNNKAKNVLQAVRNIGFVGLFTRSLPVR). A helical membrane pass occupies residues 269–289 (ITIVGPVITLQWFFYDAIKVL). Residues 290-309 (SGFPTSGGVKKPVDAAKLSV) lie on the Mitochondrial intermembrane side of the membrane.

It belongs to the mitochondrial carrier (TC 2.A.29) family. As to expression, expressed in stems, leaves and flowers. Strong expression in the stamens of flowers.

Its subcellular location is the mitochondrion inner membrane. Transport of phosphate groups from the cytosol to the mitochondrial matrix. Mediates salt stress tolerance through an ATP-dependent pathway and via modulation of the gibberellin metabolism. This is Mitochondrial phosphate carrier protein 1, mitochondrial (MPT1) from Arabidopsis thaliana (Mouse-ear cress).